The following is a 1915-amino-acid chain: Protein NLRC5 (1915 aa).

The interval 103–137 (LGAGEESCPGPQLYHGAKRPFQSYGSSPRRKNSKK) is disordered. Residues 223-542 (RVTVLLGKAG…HTVDKDTLVE (320 aa)) form the NACHT domain. 229-236 (GKAGMGKT) contacts ATP. 27 LRR repeats span residues 622–646 (VAETQDLELARFTAQSLPSRLSFHN), 716–740 (MGSLKTLGLTGSRITAQGISHLIQT), 744–771 (CSQLEEVSLHDNQLKDPEVLSLVELLPS), 772–796 (LPKLQKLDLSRNSFSRSILLSLVKV), 871–898 (SPQLEEVNLSGNHLEDDGCRLVAEAASQ), 900–923 (HIAQKLDLSDNGLSQTGVTYVLKA), 930–953 (LEDLHISLLNNTVVLTFAQEPREQ), 1006–1033 (THNLDHLDLSDNSLGGKGVILLTELLPG), 1034–1055 (LGPLKSLNLSRNGLSMDAVFSL), 1138–1161 (EVQLSCKSLSDDSLKILLQCLPQL), 1162–1184 (PQLSLLQLRHTVLSSRSPFLLAD), 1240–1263 (CNALSQLDLTDNLLGDIGLRCLLE), 1265–1292 (LPQLPISGWLDLSHNNISQEGILYLLET), 1348–1371 (AQQLTELWLTKCHLDLPQLTMLLN), 1481–1504 (SKLLQNILLSSCELKSFRLTFSQV), 1519–1542 (CHHLEELDFSNNSLREEDTELLMG), 1552–1575 (KLHLSFLPLGASSLALLIQGLSRM), 1576–1598 (TLLQDLCLSHNQIGDVGTQCLAA), 1603–1626 (LPELRKFDLSHNQIGDVGTQCLAA), 1631–1654 (LPELRKFNLSHNQIGHVGTQCLAA), 1659–1682 (LPELRKFDLSRNQIGDVGTQCLAA), 1687–1711 (LPELRKFDLSGNRIGPAGGVQLVKS), 1715–1738 (FEHLEEIKLGNNALGEPTALELAQ), 1741–1768 (PPQLRVLCLPSSHLGPEGALGLAQALEQ), 1769–1795 (CPHIEEVSLAENNLAGGVPRFSKRLPL), 1821–1845 (FPALEKLLLSGNLLGDEVAAELAQV), and 1849–1872 (MGQLKKVNLEWNRITARGAQLLAQ).

Belongs to the NLRP family. In terms of assembly, interacts with CHUK and IKBKB; prevents CHUK and IKBKB phosphorylation and inhibits their kinase activity. Interacts with RIGI and IFIH1; blocks the interaction of MAVS to RIGI. Expressed in spleen, thymus and lung.

The protein resides in the cytoplasm. Probable regulator of the NF-kappa-B and type I interferon signaling pathways. May also regulate the type II interferon signaling pathway. Plays a role in homeostatic control of innate immunity and in antiviral defense mechanisms. The chain is Protein NLRC5 (Nlrc5) from Mus musculus (Mouse).